We begin with the raw amino-acid sequence, 542 residues long: Chaperonin GroEL (542 aa).

ATP-binding positions include 29-32 (TMGP), 86-90 (DGTTT), Gly-413, 476-478 (NAA), and Asp-492. The interval 521-542 (KPDPNANNQAPAAPQGGMGGMM) is disordered. Residues 524–535 (PNANNQAPAAPQ) are compositionally biased toward low complexity.

This sequence belongs to the chaperonin (HSP60) family. As to quaternary structure, forms a cylinder of 14 subunits composed of two heptameric rings stacked back-to-back. Interacts with the co-chaperonin GroES.

It is found in the cytoplasm. It catalyses the reaction ATP + H2O + a folded polypeptide = ADP + phosphate + an unfolded polypeptide.. Its function is as follows. Together with its co-chaperonin GroES, plays an essential role in assisting protein folding. The GroEL-GroES system forms a nano-cage that allows encapsulation of the non-native substrate proteins and provides a physical environment optimized to promote and accelerate protein folding. The protein is Chaperonin GroEL of Limosilactobacillus reuteri subsp. reuteri (strain JCM 1112) (Lactobacillus reuteri).